Reading from the N-terminus, the 409-residue chain is MFVQEEKIFAGKVLRLHICAADGAEWLEEATEDTSVEKLKESCLKHGAHGSLEDPKNVTHHKLIHAASERVLSDSKTILEENIQDQDVLLLIKKRVPSPLPKMADVSAEEKKKQEQKAPDKDAILRATANLPACSTDRTAVQTTMRDFQTELRKILVSLIEVAQKLLALNPDAVELFKKANAMLDEDEDERVDETALRQLTEMGFPESRASKALRLNHMSVPQAMEWLIEHSEDPAIDTPLPGHAAQAGASAAATTSSTSSEAAVGTSVEDEESRDELTEIFKKIRRKKEFRADARAVISLMEMGFDEKEVIDALRVNNNQQNAACEWLLGDRKPSPEELDQGIDPNSPLFQAILDNPVVQLGLTNPKTLLAFEDMLENPLNSTQWMNDPETGPVMLQISRIFQTLNRT.

Met1 carries the N-acetylmethionine modification. The Ubiquitin-like domain occupies 14–98 (LRLHICAADG…LLLIKKRVPS (85 aa)). The segment at 101 to 122 (PKMADVSAEEKKKQEQKAPDKD) is disordered. A compositionally biased stretch (basic and acidic residues) spans 108–122 (AEEKKKQEQKAPDKD). Residues 187 to 231 (DEDERVDETALRQLTEMGFPESRASKALRLNHMSVPQAMEWLIEH) enclose the UBA 1 domain. A disordered region spans residues 239 to 273 (TPLPGHAAQAGASAAATTSSTSSEAAVGTSVEDEE). Low complexity predominate over residues 245–268 (AAQAGASAAATTSSTSSEAAVGTS). One can recognise a UBA 2 domain in the interval 292–332 (RADARAVISLMEMGFDEKEVIDALRVNNNQQNAACEWLLGD). The 40-residue stretch at 357–396 (NPVVQLGLTNPKTLLAFEDMLENPLNSTQWMNDPETGPVM) folds into the STI1 domain.

Component of the KPC complex composed of RNF123/KPC1 and UBAC1/KPC2. Interacts (via ubiquitin-like domain) with RNF123. Interacts (via ubiquitin-like and UBA domains) with the proteasome via its N-terminal domain.

It localises to the cytoplasm. It participates in protein modification; protein ubiquitination. Non-catalytic component of the KPC complex, a E3 ubiquitin-protein ligase complex that mediates polyubiquitination of target proteins, such as CDKN1B and NFKB1. The KPC complex catalyzes polyubiquitination and proteasome-mediated degradation of CDKN1B during G1 phase of the cell cycle. The KPC complex also acts as a key regulator of the NF-kappa-B signaling by promoting maturation of the NFKB1 component of NF-kappa-B by catalyzing ubiquitination of the NFKB1 p105 precursor. Within the KPC complex, UBAC1 acts as an adapter that promotes the transfer of target proteins that have been polyubiquitinated by RNF123/KPC1 to the 26S proteasome. This Mus musculus (Mouse) protein is Ubiquitin-associated domain-containing protein 1 (Ubac1).